A 376-amino-acid chain; its full sequence is 23S rRNA (uracil(747)-C(5))-methyltransferase RlmC (376 aa).

4 residues coordinate [4Fe-4S] cluster: C3, C11, C14, and C87. Residues Q212, F241, E262, and N307 each contribute to the S-adenosyl-L-methionine site. C334 acts as the Nucleophile in catalysis.

It belongs to the class I-like SAM-binding methyltransferase superfamily. RNA M5U methyltransferase family. RlmC subfamily.

The enzyme catalyses uridine(747) in 23S rRNA + S-adenosyl-L-methionine = 5-methyluridine(747) in 23S rRNA + S-adenosyl-L-homocysteine + H(+). Catalyzes the formation of 5-methyl-uridine at position 747 (m5U747) in 23S rRNA. The protein is 23S rRNA (uracil(747)-C(5))-methyltransferase RlmC of Yersinia pestis bv. Antiqua (strain Antiqua).